The chain runs to 626 residues: Janus kinase and microtubule-interacting protein 1 (626 aa).

A mediates association with microtubules region spans residues 1-365 (MSKKGRSKGE…KIKNLTRENV (365 aa)). Coiled-coil stretches lie at residues 19–254 (VQMA…REAE) and 284–413 (ERDV…DDLS). The mediates interaction with TYK2 and GABBR1 stretch occupies residues 365-626 (VEMKEKLSAQ…ILFEPKLKFM (262 aa)). Residue Ser-382 is modified to Phosphoserine. The span at 452 to 461 (ETLSETSCNT) shows a compositional bias: polar residues. The segment at 452–480 (ETLSETSCNTDRTDRAPATPEEDLDDTTT) is disordered. Thr-470 is subject to Phosphothreonine. Residues 490–604 (QLTREYQALQ…EFRVLELEVR (115 aa)) adopt a coiled-coil conformation.

Belongs to the JAKMIP family. In terms of assembly, homodimer. Forms a complex with GABBR1 and KIF5B/kinesin-1. Interacts with JAK1 and TYK2. In terms of processing, phosphorylated.

It is found in the cytoplasm. The protein resides in the cytoskeleton. Its subcellular location is the membrane. Functionally, associates with microtubules and may play a role in the microtubule-dependent transport of the GABA-B receptor. May play a role in JAK1 signaling and regulate microtubule cytoskeleton rearrangements. The protein is Janus kinase and microtubule-interacting protein 1 (JAKMIP1) of Bos taurus (Bovine).